A 22-amino-acid chain; its full sequence is Fuctinin-1 (22 aa).

Residues 1–22 (SASPGLPKGEKEQQEAIEHIDE) are disordered. Over residues 8–22 (KGEKEQQEAIEHIDE) the composition is skewed to basic and acidic residues.

To human SET/PHAPII protein. As to quaternary structure, oligomer.

It is found in the cytoplasm. Functionally, has a role in the physiological regulation of fucosylation processes. The protein is Fuctinin-1 of Rattus norvegicus (Rat).